We begin with the raw amino-acid sequence, 390 residues long: S-adenosylmethionine synthase (390 aa).

Glu-12 provides a ligand contact to Mg(2+). Residue His-18 participates in ATP binding. K(+) is bound at residue Glu-46. L-methionine contacts are provided by Glu-59 and Gln-102. Residues 170–172 (DGK), 238–241 (SGRF), Asp-249, 255–256 (RK), Ala-272, Lys-276, and Lys-280 contribute to the ATP site. Asp-249 contributes to the L-methionine binding site. Lys-280 is a binding site for L-methionine.

This sequence belongs to the AdoMet synthase family. Homotetramer. Mn(2+) is required as a cofactor. Mg(2+) serves as cofactor. Requires Co(2+) as cofactor. The cofactor is K(+).

The protein localises to the cytoplasm. The enzyme catalyses L-methionine + ATP + H2O = S-adenosyl-L-methionine + phosphate + diphosphate. It functions in the pathway amino-acid biosynthesis; S-adenosyl-L-methionine biosynthesis; S-adenosyl-L-methionine from L-methionine: step 1/1. Its function is as follows. Catalyzes the formation of S-adenosylmethionine from methionine and ATP. The reaction comprises two steps that are both catalyzed by the same enzyme: formation of S-adenosylmethionine (AdoMet) and triphosphate, and subsequent hydrolysis of the triphosphate. The chain is S-adenosylmethionine synthase (METM) from Chlamydomonas reinhardtii (Chlamydomonas smithii).